The primary structure comprises 555 residues: 2-succinyl-5-enolpyruvyl-6-hydroxy-3-cyclohexene-1-carboxylate synthase (555 aa).

Belongs to the TPP enzyme family. MenD subfamily. Homodimer. Mg(2+) serves as cofactor. The cofactor is Mn(2+). Requires thiamine diphosphate as cofactor.

The catalysed reaction is isochorismate + 2-oxoglutarate + H(+) = 5-enolpyruvoyl-6-hydroxy-2-succinyl-cyclohex-3-ene-1-carboxylate + CO2. It functions in the pathway quinol/quinone metabolism; 1,4-dihydroxy-2-naphthoate biosynthesis; 1,4-dihydroxy-2-naphthoate from chorismate: step 2/7. Its pathway is quinol/quinone metabolism; menaquinone biosynthesis. Functionally, catalyzes the thiamine diphosphate-dependent decarboxylation of 2-oxoglutarate and the subsequent addition of the resulting succinic semialdehyde-thiamine pyrophosphate anion to isochorismate to yield 2-succinyl-5-enolpyruvyl-6-hydroxy-3-cyclohexene-1-carboxylate (SEPHCHC). This chain is 2-succinyl-5-enolpyruvyl-6-hydroxy-3-cyclohexene-1-carboxylate synthase, found in Kineococcus radiotolerans (strain ATCC BAA-149 / DSM 14245 / SRS30216).